We begin with the raw amino-acid sequence, 3473 residues long: Genome polyprotein (3473 aa).

Residues 514–604 (EVQDALEKSM…RNDIEALKKK (91 aa)) are a coiled coil. Disordered regions lie at residues 602–644 (KKKP…SEAQ) and 1278–1306 (YLADEQPTTSAPRTSIVNTEDDPPTEGEI). 2 stretches are compositionally biased toward polar residues: residues 607–622 (QSVTPLPSPSGNSGTA) and 1278–1295 (YLADEQPTTSAPRTSIVN). Helical transmembrane passes span 1496–1516 (DKWIWAALASILVGAALLHYY) and 1595–1615 (MSSLLTILSVVASLVMWGKIP). The 167-residue stretch at 1751–1917 (LELMNESYTY…PDVPKNEANP (167 aa)) folds into the SF3 helicase domain. 1777-1784 (GAPGVGKS) is a binding site for ATP. The chain crosses the membrane as a helical span at residues 2363-2383 (ILLAIGASVAVAGVAVGAVIL). Positions 2394-2404 (EDEEIEGEEGE) are enriched in acidic residues. 2 disordered regions span residues 2394–2415 (EDEEIEGEEGETQASGAHESDG) and 2438–2465 (VAEAHEEKDAEKPRKSGNPTRKSYLGLS). The span at 2438–2451 (VAEAHEEKDAEKPR) shows a compositional bias: basic and acidic residues. Residues 2632 to 2850 (GVDRDLSMTN…YAETLTQEHL (219 aa)) form the Peptidase C3 domain. Residues H2680, E2717, and C2811 each act as for picornain 3C-like protease activity in the active site. A RdRp catalytic domain is found at 3155-3286 (TKGFAGDYSK…SVHEEFLDVY (132 aa)).

Post-translationally, specific enzymatic cleavages by picornain 3C-like protease in vivo yield mature proteins. Picornain 3C-like protease is autocatalytically processed.

The protein resides in the virion. The protein localises to the host membrane. The catalysed reaction is RNA(n) + a ribonucleoside 5'-triphosphate = RNA(n+1) + diphosphate. Functionally, picornain 3C-like protease is a thiol protease that probably cleaves the polyprotein. The polypeptide is Genome polyprotein (Oryza sativa (Rice)).